The following is an 862-amino-acid chain: MSSQLLICSVFVLFTFGPNSFPSCLAQEQAGNSDATQLSADAKAPESAKDKSGDVQNDGTKSVRSKRDLEIDFGSGDVQKRAREFVGKRAAPPVFQTPLVQDKISGFIPSETESPVIGEFAFPGSVFMDDEEALGAEEEPMDDEDLEFYKRPRQFVGKRGIDDYLLQEKLKDFIEKRPRQFVGKRPRQFVGKRPRQFVGKRPRQFVGKRPRQFVGKRPRQFVGKRPRQFVGKRPRQFVGKRPRQFVGKREADPSFLFEDKRVRDFVGKRSLDFLGGANWYNPYDVTMEPQSEGSDLQGFSKRPRQFVGKRDAFDMFEFSKRPRQFVGKRDQDEMFDFSKRPRQFVGKRDLQEFFDLSKRPRQFVGKREFDDEIDFSKRPRQFVGKRENDDDFDLSKRPRQFVGKRENDDEFDLSKRPRQFVGKRENDDELEFSKRPRQFVGKREDDEIDFSKRPRQFVGKRENDGEIDFSKRPRQFVGKRENDDEIDFSKRPRQFVGKREDGEIDFSKRPRQFVGKRENNDDLDFSKRPRQFVGKREVDDEIDFSKRPRQFVGKRENDDDLDFSKRPRQFVGKRENDDDLEFSKRPRQFVGKRENDPLLDFSKRPRQFVGKRENDDDLDFSKRPRQFVGKRENDPLIDFSKRPRQFVGKRESDGDFELSKRPRQFVGKRDVDGPGLSKRPRQFVGKREDYDIDFAKRPRQFVGKRGNEDEFEMSKRPRQFVGKRNFEELDQDFLRHMHDILDKRIPQFVSLPSLTAAKRVREFVGKRSDAAFLETLRHLRDYVGGQDEQNVSEFSYQHPYPSDLNDVGLIQQKRIREFVGKRGGDVDDINTTYRLGDFVSQPMSFVEEPSWLCRQLNAFGIS.

The N-terminal stretch at 1–20 (MSSQLLICSVFVLFTFGPNS) is a signal peptide. A propeptide spanning residues 21 to 79 (FPSCLAQEQAGNSDATQLSADAKAPESAKDKSGDVQNDGTKSVRSKRDLEIDFGSGDVQ) is cleaved from the precursor. The tract at residues 32 to 68 (NSDATQLSADAKAPESAKDKSGDVQNDGTKSVRSKRD) is disordered. Basic and acidic residues predominate over residues 43 to 53 (KAPESAKDKSG). Valine 86 bears the Valine amide mark. A propeptide spanning residues 90–149 (AAPPVFQTPLVQDKISGFIPSETESPVIGEFAFPGSVFMDDEEALGAEEEPMDDEDLEFY) is cleaved from the precursor. Valine 156 is subject to Valine amide. Residues 160–175 (GIDDYLLQEKLKDFIE) constitute a propeptide that is removed on maturation. 9 positions are modified to valine amide: valine 182, valine 190, valine 198, valine 206, valine 214, valine 222, valine 230, valine 238, and valine 246. A propeptide spanning residues 250-259 (EADPSFLFED) is cleaved from the precursor. Valine 266 carries the post-translational modification Valine amide. Residues 270–300 (SLDFLGGANWYNPYDVTMEPQSEGSDLQGFS) constitute a propeptide that is removed on maturation. Valine 307 bears the Valine amide mark. A propeptide spanning residues 311–319 (DAFDMFEFS) is cleaved from the precursor. Valine 326 bears the Valine amide mark. A propeptide spanning residues 330–338 (DQDEMFDFS) is cleaved from the precursor. At valine 345 the chain carries Valine amide. Positions 349–357 (DLQEFFDLS) are excised as a propeptide. Position 364 is a valine amide (valine 364). A propeptide spanning residues 368 to 376 (EFDDEIDFS) is cleaved from the precursor. Valine 383 is subject to Valine amide. Residues 387 to 395 (ENDDDFDLS) constitute a propeptide that is removed on maturation. A Valine amide modification is found at valine 402. The propeptide occupies 406-414 (ENDDEFDLS). Valine amide is present on valine 421. Residues 424-434 (RENDDELEFSK) show a composition bias toward basic and acidic residues. The interval 424-528 (RENDDELEFS…NNDDLDFSKR (105 aa)) is disordered. Positions 425–433 (ENDDELEFS) are excised as a propeptide. Valine 440 is modified (valine amide). Basic and acidic residues predominate over residues 441 to 452 (GKREDDEIDFSK). Positions 444–451 (EDDEIDFS) are excised as a propeptide. Residue valine 458 is modified to Valine amide. Over residues 459–471 (GKRENDGEIDFSK) the composition is skewed to basic and acidic residues. Positions 462-470 (ENDGEIDFS) are excised as a propeptide. The residue at position 477 (valine 477) is a Valine amide. Residues 478–490 (GKRENDDEIDFSK) are compositionally biased toward basic and acidic residues. Residues 481-489 (ENDDEIDFS) constitute a propeptide that is removed on maturation. Valine amide is present on valine 496. The span at 497–508 (GKREDGEIDFSK) shows a compositional bias: basic and acidic residues. The propeptide occupies 500–507 (EDGEIDFS). At valine 514 the chain carries Valine amide. Over residues 515–527 (GKRENNDDLDFSK) the composition is skewed to basic and acidic residues. The propeptide occupies 518–526 (ENNDDLDFS). Valine amide is present on valine 533. The propeptide occupies 537-545 (EVDDEIDFS). The segment at 549 to 634 (RQFVGKREND…RQFVGKREND (86 aa)) is disordered. Valine amide is present on valine 552. Positions 553 to 565 (GKRENDDDLDFSK) are enriched in basic and acidic residues. Positions 556-564 (ENDDDLDFS) are excised as a propeptide. A Valine amide modification is found at valine 571. Residues 572–584 (GKRENDDDLEFSK) are compositionally biased toward basic and acidic residues. Residues 575–583 (ENDDDLEFS) constitute a propeptide that is removed on maturation. Valine 590 carries the valine amide modification. A propeptide spanning residues 594–602 (ENDPLLDFS) is cleaved from the precursor. Residue valine 609 is modified to Valine amide. Positions 610–622 (GKRENDDDLDFSK) are enriched in basic and acidic residues. Positions 613 to 621 (ENDDDLDFS) are excised as a propeptide. Valine 628 bears the Valine amide mark. Residues 632–640 (ENDPLIDFS) constitute a propeptide that is removed on maturation. Valine 647 is modified (valine amide). The propeptide occupies 651–659 (ESDGDFELS). Residue valine 666 is modified to Valine amide. Positions 670-677 (DVDGPGLS) are excised as a propeptide. Valine 684 bears the Valine amide mark. A propeptide spanning residues 688–695 (EDYDIDFA) is cleaved from the precursor. Valine 702 is subject to Valine amide. Residues 706-714 (GNEDEFEMS) constitute a propeptide that is removed on maturation. Valine 721 carries the post-translational modification Valine amide. Residues 724–757 (RNFEELDQDFLRHMHDILDKRIPQFVSLPSLTAA) constitute a propeptide that is removed on maturation. Position 764 is a valine amide (valine 764). Residues 768–812 (SDAAFLETLRHLRDYVGGQDEQNVSEFSYQHPYPSDLNDVGLIQQ) constitute a propeptide that is removed on maturation. A Valine amide modification is found at valine 819. The propeptide occupies 823 to 862 (GGDVDDINTTYRLGDFVSQPMSFVEEPSWLCRQLNAFGIS).

Expressed abundantly in the abdominal ganglion, much less in the pedal and cerebral ganglia, and rarely in the buccal and pleural ganglia.

Its subcellular location is the secreted. PRQFV-amide may act as a modulator within the feeding system as well as in other systems of Aplysia. This chain is Protein PRQFV-amide, found in Aplysia californica (California sea hare).